Consider the following 100-residue polypeptide: Large ribosomal subunit protein eL21 (100 aa).

This sequence belongs to the eukaryotic ribosomal protein eL21 family.

This is Large ribosomal subunit protein eL21 from Pyrobaculum aerophilum (strain ATCC 51768 / DSM 7523 / JCM 9630 / CIP 104966 / NBRC 100827 / IM2).